Reading from the N-terminus, the 179-residue chain is Large ribosomal subunit protein uL5 (179 aa).

Belongs to the universal ribosomal protein uL5 family. Part of the 50S ribosomal subunit; part of the 5S rRNA/L5/L18/L25 subcomplex. Contacts the 5S rRNA and the P site tRNA. Forms a bridge to the 30S subunit in the 70S ribosome.

Its function is as follows. This is one of the proteins that bind and probably mediate the attachment of the 5S RNA into the large ribosomal subunit, where it forms part of the central protuberance. In the 70S ribosome it contacts protein S13 of the 30S subunit (bridge B1b), connecting the 2 subunits; this bridge is implicated in subunit movement. Contacts the P site tRNA; the 5S rRNA and some of its associated proteins might help stabilize positioning of ribosome-bound tRNAs. The protein is Large ribosomal subunit protein uL5 of Saccharophagus degradans (strain 2-40 / ATCC 43961 / DSM 17024).